Here is a 282-residue protein sequence, read N- to C-terminus: Elongation factor Ts (282 aa).

The segment at T79–V82 is involved in Mg(2+) ion dislocation from EF-Tu.

It belongs to the EF-Ts family.

The protein resides in the cytoplasm. In terms of biological role, associates with the EF-Tu.GDP complex and induces the exchange of GDP to GTP. It remains bound to the aminoacyl-tRNA.EF-Tu.GTP complex up to the GTP hydrolysis stage on the ribosome. The chain is Elongation factor Ts from Shewanella woodyi (strain ATCC 51908 / MS32).